We begin with the raw amino-acid sequence, 1219 residues long: Type IV pilus biogenesis factor PilY1 homolog PD_0502 (1219 aa).

The first 35 residues, 1–35 (MVGMSRIILNNLFFFRCVVAVFSAHSLVISGAVHA), serve as a signal peptide directing secretion. The disordered stretch occupies residues 212-234 (GLSTDPLNTEGQPYDPSRHPLNS). Residues glutamine 958, asparagine 960, isoleucine 962, and aspartate 964 each contribute to the Ca(2+) site.

This sequence belongs to the PilY1 family.

Its subcellular location is the fimbrium. Functionally, one of the three PilY1 homologs of X.fastidiosa, which are involved in bacterial twitching motility as component of the filamentous type IV pili (T4P). The sequence is that of Type IV pilus biogenesis factor PilY1 homolog PD_0502 from Xylella fastidiosa (strain Temecula1 / ATCC 700964).